Consider the following 217-residue polypeptide: MGLRIKICGLRDPQQAIAIADLGATAIGFIAVRQSPRYVSPAQVAEIAQALQKTHPTVNRVGVFANATAEELEAYVAAGITSLQLHGDETLADSQRWRDRFPALELIKALRIRSTADLALAESFTDCVDTLLLDAYHPQMLGGTGATLDWQALQAFQPSRPWLLAGGLTPENITTALSQLHPAGIDLSSGVERSPGDKDLEKVTALFSSLARNSLLK.

Belongs to the TrpF family.

It catalyses the reaction N-(5-phospho-beta-D-ribosyl)anthranilate = 1-(2-carboxyphenylamino)-1-deoxy-D-ribulose 5-phosphate. It participates in amino-acid biosynthesis; L-tryptophan biosynthesis; L-tryptophan from chorismate: step 3/5. This Synechococcus sp. (strain ATCC 27144 / PCC 6301 / SAUG 1402/1) (Anacystis nidulans) protein is N-(5'-phosphoribosyl)anthranilate isomerase.